We begin with the raw amino-acid sequence, 273 residues long: DnaJ homolog subfamily C member 27 (273 aa).

The required for interaction with MAPK1 stretch occupies residues 1–18 (MEANMPKRKEPGRSLRIK). GTP contacts are provided by residues 23–30 (GNAEVGKS), 71–75 (DMAGH), and 134–137 (NKID). A J domain is found at 217 to 273 (GSWDMLGVKPGASRDEVNKACRKLAVLLHPDKCVAPGSEDAFKAVVNARTALLKNIK).

This sequence belongs to the small GTPase superfamily. Rab family. In terms of assembly, interacts directly with MAPK1 (wild-type and kinase-deficient forms). Interacts directly (in GTP-bound form) with MAP2K1 (wild-type and kinase-deficient forms).

Its subcellular location is the nucleus. In terms of biological role, GTPase which can activate the MEK/ERK pathway and induce cell transformation when overexpressed. May act as a nuclear scaffold for MAPK1, probably by association with MAPK1 nuclear export signal leading to enhanced ERK1/ERK2 signaling. The protein is DnaJ homolog subfamily C member 27 (DNAJC27) of Pongo abelii (Sumatran orangutan).